A 449-amino-acid polypeptide reads, in one-letter code: Glucose-6-phosphate isomerase (449 aa).

Glutamate 291 acts as the Proton donor in catalysis. Catalysis depends on residues histidine 312 and lysine 426.

The protein belongs to the GPI family.

Its subcellular location is the cytoplasm. The catalysed reaction is alpha-D-glucose 6-phosphate = beta-D-fructose 6-phosphate. The protein operates within carbohydrate biosynthesis; gluconeogenesis. It participates in carbohydrate degradation; glycolysis; D-glyceraldehyde 3-phosphate and glycerone phosphate from D-glucose: step 2/4. Functionally, catalyzes the reversible isomerization of glucose-6-phosphate to fructose-6-phosphate. This Streptococcus pyogenes serotype M5 (strain Manfredo) protein is Glucose-6-phosphate isomerase.